The sequence spans 567 residues: Zinc finger protein 512 (567 aa).

Residues Met1 to Gln34 are disordered. Residues Lys18 and Lys84 each participate in a glycyl lysine isopeptide (Lys-Gly) (interchain with G-Cter in SUMO2) cross-link. The interval Ala87 to Pro148 is disordered. The span at Lys119–Pro130 shows a compositional bias: basic residues. The C2H2-type 1 zinc finger occupies Phe197 to His220. Residue Lys227 forms a Glycyl lysine isopeptide (Lys-Gly) (interchain with G-Cter in SUMO2) linkage. The C2H2-type 2 zinc finger occupies Leu287–His310. Lys333 participates in a covalent cross-link: Glycyl lysine isopeptide (Lys-Gly) (interchain with G-Cter in SUMO2). The C2H2-type 3; atypical zinc finger occupies Ile406–Cys430. Residues Tyr440–His463 form a C2H2-type 3 zinc finger. Positions Lys485 to Arg494 are enriched in basic and acidic residues. The tract at residues Lys485 to Lys567 is disordered. The span at Arg495–Gln508 shows a compositional bias: basic residues. Residues Val523 to Glu544 show a composition bias toward basic and acidic residues. Residues Arg556–Lys567 are compositionally biased toward basic residues.

It belongs to the krueppel C2H2-type zinc-finger protein family.

It is found in the nucleus. In terms of biological role, may be involved in transcriptional regulation. In Bos taurus (Bovine), this protein is Zinc finger protein 512 (ZNF512).